The primary structure comprises 790 residues: Cadherin-18 (790 aa).

Residues 1–24 (MKITSTSCICPVLVCLCFVQRCYG) form the signal peptide. Residues 25–53 (TAHHSSIKVMRNQTKHIEGETEVHHRPKR) constitute a propeptide that is removed on maturation. Residue Asn-36 is glycosylated (N-linked (GlcNAc...) asparagine). Cadherin domains lie at 54 to 159 (GWVW…APKF), 160 to 268 (TDGP…PPRF), 269 to 383 (PQKH…PPLF), 384 to 486 (SMPS…DNPP), and 487 to 608 (ELAR…FLSS). At 54–608 (GWVWNQFFVL…TCHAEAFLSS (555 aa)) the chain is on the extracellular side. N-linked (GlcNAc...) asparagine glycosylation is present at Asn-255. Residues Asn-455 and Asn-536 are each glycosylated (N-linked (GlcNAc...) asparagine). Residues 609–636 (AGLSTGALIAILLCVLILLAIVVLFITL) form a helical membrane-spanning segment. The Cytoplasmic portion of the chain corresponds to 637–790 (RRSKKEPLII…YGEIESERTT (154 aa)). At Ser-786 the chain carries Phosphoserine.

The protein localises to the cell membrane. Cadherins are calcium-dependent cell adhesion proteins. They preferentially interact with themselves in a homophilic manner in connecting cells; cadherins may thus contribute to the sorting of heterogeneous cell types. This is Cadherin-18 (CDH18) from Homo sapiens (Human).